The following is a 927-amino-acid chain: BTB/POZ domain-containing protein KCTD19 (927 aa).

Residues 18–72 (NVGGWHFSVPRSKLAQFPDSLLWKEASALTSSENQRLFIDRDGSTFRHVHYYLYT) enclose the BTB 1 domain. Ser270 is subject to Phosphoserine. Residues 399-486 (IKLYVGSHWY…YHIPALSEAL (88 aa)) form the BTB 2 domain. Positions 664 to 760 (VEEASLHVPS…NANGTDNPGA (97 aa)) are disordered. Residues 731-743 (DWGKQRPKDRESP) show a composition bias toward basic and acidic residues.

Identified in a complex with ZNF541, HDAC1 and HSPA2. Identified in a complex with ZNF541 and HDAC1. Identified in a complex with HDAC1, HDAC2, DNTTIP1 and ZNF541. In terms of tissue distribution, detected in adult testis.

It is found in the nucleus. Transcription regulator which is essential for male fertility and for the completion of meiotic prophase in spermatocytes. Regulates progression of the pachytene stage of meiotic prophase and promotes the transcriptional activation activity ZNF541. Required for the organization of chromosomes during metaphase I. The sequence is that of BTB/POZ domain-containing protein KCTD19 (Kctd19) from Mus musculus (Mouse).